A 97-amino-acid polypeptide reads, in one-letter code: Putative septation protein SpoVG (97 aa).

It belongs to the SpoVG family.

Its function is as follows. Could be involved in septation. The protein is Putative septation protein SpoVG of Anaeromyxobacter sp. (strain Fw109-5).